A 337-amino-acid polypeptide reads, in one-letter code: DnaJ homolog dnj-2 (337 aa).

A helical membrane pass occupies residues 4-24 (AIAAPILFLLVSFFVQECESV). The J domain occupies 36–105 (NCYDVLEVNR…EAKTNYDYYL (70 aa)). 2 consecutive transmembrane segments (helical) span residues 127–147 (VDLR…QFLS) and 222–242 (LAWH…WTAL). The stretch at 293 to 323 (LKRNCATWKAERDAAEQEKMAQSGRYKRYKR) forms a coiled coil.

The protein belongs to the DNAJC25 family.

Its subcellular location is the membrane. In Caenorhabditis elegans, this protein is DnaJ homolog dnj-2 (dnj-2).